The primary structure comprises 277 residues: Indole-3-glycerol phosphate synthase (277 aa).

This sequence belongs to the TrpC family.

It catalyses the reaction 1-(2-carboxyphenylamino)-1-deoxy-D-ribulose 5-phosphate + H(+) = (1S,2R)-1-C-(indol-3-yl)glycerol 3-phosphate + CO2 + H2O. Its pathway is amino-acid biosynthesis; L-tryptophan biosynthesis; L-tryptophan from chorismate: step 4/5. The chain is Indole-3-glycerol phosphate synthase from Pseudomonas putida (strain GB-1).